The primary structure comprises 400 residues: Jasmonate-induced oxygenase 1 (400 aa).

Residues 248-349 form the Fe2OG dioxygenase domain; it reads DVGACLRVNY…RVSLAFFYNP (102 aa). Arginine 254 serves as a coordination point for jasmonate. 2 residues coordinate 2-oxoglutarate: asparagine 256 and tyrosine 258. Fe cation contacts are provided by histidine 273, aspartate 275, and histidine 330. 2-oxoglutarate-binding residues include arginine 340 and serine 342. Residues arginine 379 and arginine 383 each coordinate jasmonate.

It belongs to the iron/ascorbate-dependent oxidoreductase family. L-ascorbate is required as a cofactor. It depends on Fe(2+) as a cofactor.

It carries out the reaction jasmonate + 2-oxoglutarate + O2 = (1R,2R)-12-hydroxyjasmonate + succinate + CO2. In terms of biological role, 2-oxoglutarate-dependent dioxygenase involved in the oxidation of jasmonate (JA), a stress-induced phytohormone synthesized in response to attack by pathogens and herbivores, which triggers the activation of defense responses via the JA-mediated signaling pathway. Converts JA to 12-hydroxyjasmonate (12OH-JA), an inactive form of JA. Prevents over-accumulation of JA and indirectly its bioactive form JA-Ile under stress response. Acts as a negative regulator of JA-mediated defense signaling, by contributing to 12OH-JA accumulation, which represses JA defense responses upon infection by the fungal pathogen Botrytis cinerea and the herbivorous caterpillar Mamestra brassicae. This chain is Jasmonate-induced oxygenase 1, found in Arabidopsis thaliana (Mouse-ear cress).